The sequence spans 278 residues: Diaminopimelate epimerase (278 aa).

Residues Asn-13, Gln-46, and Asn-66 each contribute to the substrate site. The active-site Proton donor is the Cys-75. Residues 76–77 (GN), Asn-159, Asn-192, and 210–211 (ER) each bind substrate. Cys-219 functions as the Proton acceptor in the catalytic mechanism. A substrate-binding site is contributed by 220-221 (GT).

This sequence belongs to the diaminopimelate epimerase family. In terms of assembly, homodimer.

It is found in the cytoplasm. The catalysed reaction is (2S,6S)-2,6-diaminopimelate = meso-2,6-diaminopimelate. The protein operates within amino-acid biosynthesis; L-lysine biosynthesis via DAP pathway; DL-2,6-diaminopimelate from LL-2,6-diaminopimelate: step 1/1. Its function is as follows. Catalyzes the stereoinversion of LL-2,6-diaminopimelate (L,L-DAP) to meso-diaminopimelate (meso-DAP), a precursor of L-lysine and an essential component of the bacterial peptidoglycan. The polypeptide is Diaminopimelate epimerase (Laribacter hongkongensis (strain HLHK9)).